Consider the following 297-residue polypeptide: Putative thiosulfate sulfurtransferase SseA (297 aa).

2 consecutive Rhodanese domains span residues 31–138 and 168–286; these read GAPG…ETTL and ILGA…VPIV. Cys-245 functions as the Cysteine persulfide intermediate in the catalytic mechanism. Arg-250 lines the substrate pocket.

It catalyses the reaction thiosulfate + hydrogen cyanide = thiocyanate + sulfite + 2 H(+). The sequence is that of Putative thiosulfate sulfurtransferase SseA (sseA) from Mycobacterium tuberculosis (strain CDC 1551 / Oshkosh).